We begin with the raw amino-acid sequence, 423 residues long: MSASAVFILDVKGKPLISRNYKGDVPMTEIDHFMPLLMQREEEGMLAPLLSHGRVHFLWIKHSNLYLVATTLKNANASLVYSFLYKTVEVFCEYFKELEEESIRDNFVIVYELLDELMDFGFPQTTDSKILQEYITQQGNKLETGKSRVPPTVTNAVSWRSEGIKYKKNEVFIDVIESVNLLVNANGSVLLSEIVGTIKLKVFLSGMPELRLGLNDRVLFELTGRSKNKSVELEDVKFHQCVRLSRFDNDRTISFIPPDGDFELMSYRLSTQVRPRVDXESVIEKFSHSRVEIMVKAKGQFKKQSVANGVEISVPVPSDADSPRFKTSVGSAKYVPEKNVVIWSIKSFPGGKEYLMRAHFGLPSVETEEVEGRPPIGVKFEIPYFTVSGIQVRYMKIIEKSGYQALPWVRYITQSGDYQLRTS.

The region spanning 168 to 421 (KNEVFIDVIE…ITQSGDYQLR (254 aa)) is the MHD domain.

Belongs to the adaptor complexes medium subunit family. In terms of assembly, adaptor protein complex 1 (AP-1) is a heterotetramer composed of two large adaptins (gamma-type subunit AP1G1 and beta-type subunit AP1B1), a medium adaptin (mu-type subunit AP1M1 or AP1M2) and a small adaptin (sigma-type subunit AP1S1 or AP1S2 or AP1S3). Interacts with P2X4. Post-translationally, phosphorylation of membrane-bound AP1M1/AP1M2 increases its affinity for sorting signals.

The protein resides in the golgi apparatus. It localises to the cytoplasmic vesicle. Its subcellular location is the clathrin-coated vesicle membrane. Functionally, subunit of clathrin-associated adaptor protein complex 1 that plays a role in protein sorting in the trans-Golgi network (TGN) and endosomes. The AP complexes mediate the recruitment of clathrin to membranes and the recognition of sorting signals within the cytosolic tails of transmembrane cargo molecules. In Rattus norvegicus (Rat), this protein is AP-1 complex subunit mu-2 (Ap1m2).